A 193-amino-acid polypeptide reads, in one-letter code: Cytidylate kinase (193 aa).

Gly12–Thr20 contributes to the ATP binding site.

It belongs to the cytidylate kinase family. Type 2 subfamily.

It is found in the cytoplasm. The catalysed reaction is CMP + ATP = CDP + ADP. The enzyme catalyses dCMP + ATP = dCDP + ADP. This Thermococcus sibiricus (strain DSM 12597 / MM 739) protein is Cytidylate kinase.